The primary structure comprises 383 residues: Embryonic pepsinogen (383 aa).

The signal sequence occupies residues 1-16 (MRSLALLCAVLALSDG). In terms of domain architecture, Peptidase A1 spans 76-380 (YYGTISIGTP…DRANNRVGLA (305 aa)). Aspartate 94 is an active-site residue. Cysteine 107 and cysteine 112 are oxidised to a cystine. Residues asparagine 132 and asparagine 204 are each glycosylated (N-linked (GlcNAc...) asparagine). Cysteine 267 and cysteine 271 are disulfide-bonded. Residue aspartate 276 is part of the active site. The N-linked (GlcNAc...) asparagine glycan is linked to asparagine 309. Residues cysteine 310 and cysteine 344 are joined by a disulfide bond. A glycan (N-linked (GlcNAc...) asparagine) is linked at asparagine 350.

Belongs to the peptidase A1 family.

The chain is Embryonic pepsinogen from Gallus gallus (Chicken).